The following is a 215-amino-acid chain: Probable phosphoglycerate mutase GpmB (215 aa).

Substrate is bound by residues 8–15 (RHGETLWN), 21–22 (QG), R58, 82–85 (ELNM), and 151–152 (GM). H9 functions as the Tele-phosphohistidine intermediate in the catalytic mechanism. E82 acts as the Proton donor/acceptor in catalysis.

The protein belongs to the phosphoglycerate mutase family. GpmB subfamily.

The catalysed reaction is (2R)-2-phosphoglycerate = (2R)-3-phosphoglycerate. Its pathway is carbohydrate degradation; glycolysis; pyruvate from D-glyceraldehyde 3-phosphate: step 3/5. The polypeptide is Probable phosphoglycerate mutase GpmB (Yersinia pseudotuberculosis serotype O:1b (strain IP 31758)).